Here is a 496-residue protein sequence, read N- to C-terminus: UDP-glycosyltransferase 73C3 (496 aa).

UDP-alpha-D-glucose is bound by residues Ser-297, 357–359, 374–382, and 396–399; these read APQ, HCGWNSTLE, and FGDQ.

Belongs to the UDP-glycosyltransferase family.

In Arabidopsis thaliana (Mouse-ear cress), this protein is UDP-glycosyltransferase 73C3 (UGT73C3).